A 238-amino-acid polypeptide reads, in one-letter code: Major prion protein (238 aa).

The first 15 residues, 1-15 (MLVLFVATWSDLGLC), serve as a signal peptide directing secretion. An interaction with GRB2, ERI3 and SYN1 region spans residues 16-215 (KKRPKPGGWN…ESQAYYQRGS (200 aa)). The segment at 18-93 (RPKPGGWNTG…WHKPSKPKTS (76 aa)) is disordered. Tandem repeats lie at residues 44-52 (PQGGGGWGQ), 53-60 (PHGGGWGQ), 61-68 (PHGGGWGQ), and 69-76 (PHGGGWGQ). Residues 44–83 (PQGGGGWGQPHGGGWGQPHGGGWGQPHGGGWGQGGGTHNQ) are 4 X 8 AA tandem repeats of P-H-G-G-G-W-G-Q. The span at 45-80 (QGGGGWGQPHGGGWGQPHGGGWGQPHGGGWGQGGGT) shows a compositional bias: gly residues. Glycine 47, glycine 48, histidine 54, glycine 55, glycine 56, histidine 62, glycine 63, glycine 64, histidine 70, glycine 71, and glycine 72 together coordinate Cu(2+). Over residues 83-93 (QWHKPSKPKTS) the composition is skewed to basic residues. Cysteines 164 and 199 form a disulfide. Asparagine 166 and asparagine 182 each carry an N-linked (GlcNAc...) asparagine glycan. The GPI-anchor amidated serine moiety is linked to residue serine 215. A propeptide spans 216–238 (SIVLFSSPPVILLISFLIFLIVG) (removed in mature form).

It belongs to the prion family. Monomer and homodimer. Has a tendency to aggregate into amyloid fibrils containing a cross-beta spine, formed by a steric zipper of superposed beta-strands. Soluble oligomers may represent an intermediate stage on the path to fibril formation. Copper binding may promote oligomerization. Interacts with GRB2, APP, ERI3/PRNPIP and SYN1. Mislocalized cytosolically exposed PrP interacts with MGRN1; this interaction alters MGRN1 subcellular location and causes lysosomal enlargement. Interacts with KIAA1191.

The protein localises to the cell membrane. It localises to the golgi apparatus. In terms of biological role, its primary physiological function is unclear. Has cytoprotective activity against internal or environmental stresses. May play a role in neuronal development and synaptic plasticity. May be required for neuronal myelin sheath maintenance. May play a role in iron uptake and iron homeostasis. Soluble oligomers are toxic to cultured neuroblastoma cells and induce apoptosis (in vitro). Association with GPC1 (via its heparan sulfate chains) targets PRNP to lipid rafts. Also provides Cu(2+) or Zn(2+) for the ascorbate-mediated GPC1 deaminase degradation of its heparan sulfate side chains. The polypeptide is Major prion protein (PRNP) (Theropithecus gelada (Gelada baboon)).